We begin with the raw amino-acid sequence, 253 residues long: Sulfate transporter CysZ (253 aa).

4 helical membrane passes run 31-51 (FVIL…WWLF), 75-95 (LLWP…FSTI), 151-171 (IVLL…PVLW), and 222-242 (IPLL…AMWV).

This sequence belongs to the CysZ family.

The protein resides in the cell inner membrane. Its function is as follows. High affinity, high specificity proton-dependent sulfate transporter, which mediates sulfate uptake. Provides the sulfur source for the cysteine synthesis pathway. This Escherichia coli O7:K1 (strain IAI39 / ExPEC) protein is Sulfate transporter CysZ.